The following is a 345-amino-acid chain: GTPase Obg (345 aa).

The Obg domain occupies 1-159; that stretch reads MKFIDEAIIK…RTLRLELKLL (159 aa). Positions 127–148 are disordered; it reads NARFKSSTNRAPRKTTQGKPGE. Residues 130-144 show a composition bias toward polar residues; sequence FKSSTNRAPRKTTQG. Residues 160–334 enclose the OBG-type G domain; the sequence is ADVGLLGLPN…LIHAVMQYLE (175 aa). Residues 166 to 173, 191 to 195, 213 to 216, 284 to 287, and 315 to 317 each bind GTP; these read GLPNAGKS, FTTLH, DIPG, NKTD, and SAL. 2 residues coordinate Mg(2+): Ser173 and Thr193.

This sequence belongs to the TRAFAC class OBG-HflX-like GTPase superfamily. OBG GTPase family. As to quaternary structure, monomer. Requires Mg(2+) as cofactor.

The protein localises to the cytoplasm. Functionally, an essential GTPase which binds GTP, GDP and possibly (p)ppGpp with moderate affinity, with high nucleotide exchange rates and a fairly low GTP hydrolysis rate. Plays a role in control of the cell cycle, stress response, ribosome biogenesis and in those bacteria that undergo differentiation, in morphogenesis control. In Nitrosococcus oceani (strain ATCC 19707 / BCRC 17464 / JCM 30415 / NCIMB 11848 / C-107), this protein is GTPase Obg.